The chain runs to 211 residues: tRNA (guanine-N(7)-)-methyltransferase (211 aa).

S-adenosyl-L-methionine contacts are provided by glutamate 44, aspartate 69, aspartate 96, and aspartate 118. The active site involves aspartate 118. Lysine 122 lines the substrate pocket. Residues 124–129 (KHEKRR) form an interaction with RNA region. Residues aspartate 154 and 191-194 (TEYE) each bind substrate.

This sequence belongs to the class I-like SAM-binding methyltransferase superfamily. TrmB family.

It catalyses the reaction guanosine(46) in tRNA + S-adenosyl-L-methionine = N(7)-methylguanosine(46) in tRNA + S-adenosyl-L-homocysteine. Its pathway is tRNA modification; N(7)-methylguanine-tRNA biosynthesis. Its function is as follows. Catalyzes the formation of N(7)-methylguanine at position 46 (m7G46) in tRNA. This chain is tRNA (guanine-N(7)-)-methyltransferase, found in Streptococcus pyogenes serotype M6 (strain ATCC BAA-946 / MGAS10394).